The chain runs to 330 residues: DNA primase small subunit PriS (330 aa).

Active-site residues include D101 and D103. Zn(2+)-binding residues include C116, C119, C128, and D131. The active site involves D235.

This sequence belongs to the eukaryotic-type primase small subunit family. In terms of assembly, heterodimer of a small subunit (PriS) and a large subunit (PriL). It depends on Mg(2+) as a cofactor. Mn(2+) is required as a cofactor.

Catalytic subunit of DNA primase, an RNA polymerase that catalyzes the synthesis of short RNA molecules used as primers for DNA polymerase during DNA replication. The small subunit contains the primase catalytic core and has DNA synthesis activity on its own. Binding to the large subunit stabilizes and modulates the activity, increasing the rate of DNA synthesis while decreasing the length of the DNA fragments, and conferring RNA synthesis capability. The DNA polymerase activity may enable DNA primase to also catalyze primer extension after primer synthesis. May also play a role in DNA repair. Possesses a template-independent 3'-terminal nucleotidyl transferase activity. The chain is DNA primase small subunit PriS from Saccharolobus solfataricus (strain ATCC 35092 / DSM 1617 / JCM 11322 / P2) (Sulfolobus solfataricus).